A 216-amino-acid chain; its full sequence is 7-carboxy-7-deazaguanine synthase (216 aa).

Residues Leu-12–Gly-14 and Arg-27 each bind substrate. Residues Arg-18–Pro-216 enclose the Radical SAM core domain. The [4Fe-4S] cluster site is built by Cys-31, Cys-46, and Cys-49. Thr-51 is a Mg(2+) binding site. Thr-93 contacts substrate. Residues Gly-95, Ser-136–Lys-138, and Gln-176–Asp-179 contribute to the S-adenosyl-L-methionine site. A substrate-binding site is contributed by Pro-216.

This sequence belongs to the radical SAM superfamily. 7-carboxy-7-deazaguanine synthase family. Homodimer. The cofactor is [4Fe-4S] cluster. S-adenosyl-L-methionine is required as a cofactor. Requires Mg(2+) as cofactor.

It carries out the reaction 6-carboxy-5,6,7,8-tetrahydropterin + H(+) = 7-carboxy-7-deazaguanine + NH4(+). Its pathway is purine metabolism; 7-cyano-7-deazaguanine biosynthesis. Its function is as follows. Catalyzes the complex heterocyclic radical-mediated conversion of 6-carboxy-5,6,7,8-tetrahydropterin (CPH4) to 7-carboxy-7-deazaguanine (CDG), a step common to the biosynthetic pathways of all 7-deazapurine-containing compounds. The polypeptide is 7-carboxy-7-deazaguanine synthase (Nitratidesulfovibrio vulgaris (strain ATCC 29579 / DSM 644 / CCUG 34227 / NCIMB 8303 / VKM B-1760 / Hildenborough) (Desulfovibrio vulgaris)).